Reading from the N-terminus, the 609-residue chain is Glutamine--fructose-6-phosphate aminotransferase [isomerizing] (609 aa).

C2 functions as the Nucleophile; for GATase activity in the catalytic mechanism. The 216-residue stretch at 2–217 folds into the Glutamine amidotransferase type-2 domain; the sequence is CGIVGYIGRR…EGWLAELTPE (216 aa). SIS domains are found at residues 286–425 and 458–599; these read SAAE…QNGR and AAEA…VDKP. The For Fru-6P isomerization activity role is filled by K604.

In terms of assembly, homodimer.

It is found in the cytoplasm. It carries out the reaction D-fructose 6-phosphate + L-glutamine = D-glucosamine 6-phosphate + L-glutamate. In terms of biological role, catalyzes the first step in hexosamine metabolism, converting fructose-6P into glucosamine-6P using glutamine as a nitrogen source. The polypeptide is Glutamine--fructose-6-phosphate aminotransferase [isomerizing] (Symbiobacterium thermophilum (strain DSM 24528 / JCM 14929 / IAM 14863 / T)).